The chain runs to 417 residues: Squalene synthase (417 aa).

2 residues coordinate NADP(+): Arg52 and Arg77. 3 residues coordinate Mg(2+): Asp80, Glu83, and Asp84. An NADP(+)-binding site is contributed by Arg218. The helical transmembrane segment at 284 to 304 (SVFNFCAIPQVMAIATLAACY) threads the bilayer. Positions 315 and 317 each coordinate NADP(+). A helical transmembrane segment spans residues 384 to 404 (PIYLSFVMLLAALSWQYLTTL).

Belongs to the phytoene/squalene synthase family. Mg(2+) serves as cofactor. As to expression, widely expressed.

It is found in the endoplasmic reticulum membrane. The catalysed reaction is 2 (2E,6E)-farnesyl diphosphate + NADPH + H(+) = squalene + 2 diphosphate + NADP(+). It catalyses the reaction 2 (2E,6E)-farnesyl diphosphate + NADH + H(+) = squalene + 2 diphosphate + NAD(+). The enzyme catalyses 2 (2E,6E)-farnesyl diphosphate = presqualene diphosphate + diphosphate. It carries out the reaction presqualene diphosphate + NADH + H(+) = squalene + diphosphate + NAD(+). The catalysed reaction is presqualene diphosphate + NADPH + H(+) = squalene + diphosphate + NADP(+). It functions in the pathway terpene metabolism; lanosterol biosynthesis; lanosterol from farnesyl diphosphate: step 1/3. Its function is as follows. Catalyzes the condensation of 2 farnesyl pyrophosphate (FPP) moieties to form squalene. Proceeds in two distinct steps. In the first half-reaction, two molecules of FPP react to form the stable presqualene diphosphate intermediate (PSQPP), with concomitant release of a proton and a molecule of inorganic diphosphate. In the second half-reaction, PSQPP undergoes heterolysis, isomerization, and reduction with NADPH or NADH to form squalene. It is the first committed enzyme of the sterol biosynthesis pathway. This is Squalene synthase (FDFT1) from Homo sapiens (Human).